Reading from the N-terminus, the 303-residue chain is Probable 5-dehydro-4-deoxyglucarate dehydratase (303 aa).

This sequence belongs to the DapA family.

The catalysed reaction is 5-dehydro-4-deoxy-D-glucarate + H(+) = 2,5-dioxopentanoate + CO2 + H2O. It functions in the pathway carbohydrate acid metabolism; D-glucarate degradation; 2,5-dioxopentanoate from D-glucarate: step 2/2. This Pseudomonas putida (strain ATCC 700007 / DSM 6899 / JCM 31910 / BCRC 17059 / LMG 24140 / F1) protein is Probable 5-dehydro-4-deoxyglucarate dehydratase.